Consider the following 313-residue polypeptide: Glutathione synthetase (313 aa).

An ATP-grasp domain is found at 125 to 309 (KLFVMDFTEL…IAAKIWDVIE (185 aa)). Position 151-207 (151-207 (RAEHGAVVMKPLHGHGGAAVFRVLPQDINFGSLYDMFAVTFREPWVIQRFLPEVKHG)) interacts with ATP. 2 residues coordinate Mg(2+): glutamate 280 and asparagine 282.

The protein belongs to the prokaryotic GSH synthase family. It depends on Mg(2+) as a cofactor. Mn(2+) is required as a cofactor.

It carries out the reaction gamma-L-glutamyl-L-cysteine + glycine + ATP = glutathione + ADP + phosphate + H(+). The protein operates within sulfur metabolism; glutathione biosynthesis; glutathione from L-cysteine and L-glutamate: step 2/2. The protein is Glutathione synthetase of Rhodopseudomonas palustris (strain ATCC BAA-98 / CGA009).